Consider the following 215-residue polypeptide: UPF0502 protein YceH (215 aa).

The residue at position 80 (Lys-80) is an N6-acetyllysine.

The protein belongs to the UPF0502 family.

In Escherichia coli (strain K12 / MC4100 / BW2952), this protein is UPF0502 protein YceH.